The following is a 409-amino-acid chain: MSFLKLFKQFVVTGFNKKLLFLSETTCWSYEIQPDLPLEKCRPKKYFDADSDSDEESTQQPQKPPTNGNGTADNVQIVALEVHEGKSLLAVATSDKSLFLFAIDPEGDETNKDRLKLLSRRMVSRTSSCMKFAASGKFLVVCDKGGDCYRYDCDDDDCKKPGRWLLGHMSQVLDVLVPDNERFIITSDRDEKIRVTNHPDCHSIETFCLGHGEFVSQLEFVTAKDGKSRLLSLSGDKTLRLWDYETGKEVARKELSHPGNRFAVKQLLDGTLLVAVLFYEPTEMAIYKLTEVESLTSETIQTLKTNQNEVFSSFAFDERNNLLSLVVDKVTEKISLKWYQFEQENCKFNDLTPNPLEKLFFDNTENDKISYVDSVSFLFKKKFDNLKDYQERKRRRIVEGGKYNYGGRM.

The segment at 48–72 (DADSDSDEESTQQPQKPPTNGNGTA) is disordered. The span at 58–72 (TQQPQKPPTNGNGTA) shows a compositional bias: polar residues. 4 WD repeats span residues 72-111 (ADNVQIVALEVHEGKSLLAVATSDKSLFLFAIDPEGDETN), 122-161 (MVSRTSSCMKFAASGKFLVVCDKGGDCYRYDCDDDDCKKP), 167-206 (GHMSQVLDVLVPDNERFIITSDRDEKIRVTNHPDCHSIET), and 210-252 (GHGE…EVAR).

Belongs to the WD repeat TRM82 family. Forms a heterodimer with the catalytic subunit.

The protein localises to the nucleus. The protein operates within tRNA modification; N(7)-methylguanine-tRNA biosynthesis. In terms of biological role, required for the formation of N(7)-methylguanine at position 46 (m7G46) in tRNA. In the complex, it is required to stabilize and induce conformational changes of the catalytic subunit. The chain is tRNA (guanine-N(7)-)-methyltransferase non-catalytic subunit wuho from Aedes aegypti (Yellowfever mosquito).